A 135-amino-acid polypeptide reads, in one-letter code: C-type lectin APL (135 aa).

Disulfide bonds link cysteine 3–cysteine 14, cysteine 31–cysteine 131, cysteine 38–cysteine 133, and cysteine 106–cysteine 123. One can recognise a C-type lectin domain in the interval 10–132 (MNGLCYKIFD…CESKNAFLCQ (123 aa)). Ca(2+) contacts are provided by glutamine 96, aspartate 98, glutamate 104, asparagine 119, and aspartate 120. The Galactose-binding signature appears at 96–98 (QPD).

This sequence belongs to the true venom lectin family. As to quaternary structure, homodimer; disulfide-linked. In terms of tissue distribution, expressed by the venom gland.

Its subcellular location is the secreted. Beta-galactoside lectin that agglutinates rabbit and human erythrocytes in a calcium-dependent fashion (MHC is 0.21 ug/ml on rabbit erythrocytes). Galactose (15 mM), lactose (20 mM), rhamnose (20 mM) and EGTA strongly inhibit this activity. The protein is C-type lectin APL of Agkistrodon piscivorus piscivorus (Eastern cottonmouth).